Consider the following 124-residue polypeptide: MADDLKRFLYKKLPSVEGLHAIVVSDRDGVPVIKVANDSAPEHALRPGFLSTFALATDQGSKLGLSKNKSIICYYNTYQVVQFNRLPLVVSFIASSNANTGLIVSLEKELAPLFEELIKVVEVS.

Residues 57–70 form a required for interaction with LAMTOR2 region; the sequence is TDQGSKLGLSKNKS.

The protein belongs to the LAMTOR3 family. Part of the Ragulator complex composed of LAMTOR1, LAMTOR2, LAMTOR3, LAMTOR4 and LAMTOR5. LAMTOR4 and LAMTOR5 form a heterodimer that interacts, through LAMTOR1, with a LAMTOR2, LAMTOR3 heterodimer. Interacts with LAMTOR1 and LAMTOR2; the interaction is direct. The Ragulator complex interacts with both the mTORC1 complex and heterodimers constituted of the Rag GTPases RagA/RRAGA, RagB/RRAGB, RagC/RRAGC and RagD/RRAGD; regulated by amino acid availability. The Ragulator complex interacts with SLC38A9; the probable amino acid sensor. Component of the lysosomal folliculin complex (LFC), composed of FLCN, FNIP1 (or FNIP2), RagA/RRAGA or RagB/RRAGB GDP-bound, RagC/RRAGC or RagD/RRAGD GTP-bound, and Ragulator. Interacts with MAP2K1/MEK1 and MAPK2. Interacts with MORG1.

The protein localises to the late endosome membrane. Its function is as follows. As part of the Ragulator complex it is involved in amino acid sensing and activation of mTORC1, a signaling complex promoting cell growth in response to growth factors, energy levels, and amino acids. Activated by amino acids through a mechanism involving the lysosomal V-ATPase, the Ragulator plays a dual role for the small GTPases Rag (RagA/RRAGA, RagB/RRAGB, RagC/RRAGC and/or RagD/RRAGD): it (1) acts as a guanine nucleotide exchange factor (GEF), activating the small GTPases Rag and (2) mediates recruitment of Rag GTPases to the lysosome membrane. Activated Ragulator and Rag GTPases function as a scaffold recruiting mTORC1 to lysosomes where it is in turn activated. Adapter protein that enhances the efficiency of the MAP kinase cascade facilitating the activation of MAPK2. The sequence is that of Ragulator complex protein LAMTOR3 (Lamtor3) from Rattus norvegicus (Rat).